The primary structure comprises 55 residues: Small ribosomal subunit protein uS14 (55 aa).

Residues 1 to 20 (MSFEPSGPHSHRKPFGKGSR) are disordered. Positions 22, 25, 38, and 41 each coordinate Zn(2+).

Belongs to the universal ribosomal protein uS14 family. Requires Zn(2+) as cofactor.

The chain is Small ribosomal subunit protein uS14 (RPS29) from Encephalitozoon cuniculi (strain GB-M1) (Microsporidian parasite).